Consider the following 2274-residue polypeptide: Adenomatous polyposis coli protein 2 (2274 aa).

Residues 5-59 (MASYEQLVRQVEALKAENTHLRQELRDNSSHLSKLETETSGMKEVLKHLQGKLEQ) adopt a coiled-coil conformation. 2 disordered regions span residues 97–120 (GPEP…KDSF) and 248–269 (VEEE…QPGN). 6 ARM repeats span residues 301–341 (PESC…GAKD), 472–511 (ANKA…NLSW), 515–555 (INSK…NLSA), 557–602 (STEN…NVSS), 608–647 (EDYR…NLSA), and 650–689 (PRDQ…NLLA). A coiled-coil region spans residues 832–856 (AAKAKAKLALAVARIDRLVEDISAL). 3 disordered regions span residues 859–901 (SSDD…GSRA), 1061–1143 (CSSL…NCVQ), and 1165–1216 (SIAS…TSQF). A compositionally biased stretch (low complexity) spans 861 to 870 (DDSFSLSSGD). Copy 1 of the repeat occupies 1049–1068 (LVAQDGPMSLSRCSSLSSLS). The interval 1049–1565 (LVAQDGPMSL…SLTSSASSLS (517 aa)) is 5 X 20 AA approximate repeat of F-X-V-E-X-T-P-X-C-F-S-R-X-S-S-L-S-S-L-S. The tract at residues 1049–1565 (LVAQDGPMSL…SLTSSASSLS (517 aa)) is interaction with CTNNB1. The segment covering 1077–1086 (QAENLDSDSS) has biased composition (polar residues). A compositionally biased stretch (low complexity) spans 1092-1103 (EAGPGEAELGRA). The segment covering 1133-1143 (TPSSSSENCVQ) has biased composition (polar residues). Repeat unit 2 spans residues 1140–1159 (NCVQETPLVLSRCSSVSSLG). Residues 1250 to 1269 (FTVEKPDENFSCASSLSALA) form repeat 3. Disordered regions lie at residues 1290–1323 (ERAV…SATD), 1368–1480 (RGDD…LQSL), 1493–1631 (FYDS…DIRP), 1699–2003 (STLQ…RGRP), 2022–2122 (PRQP…IKDE), and 2135–2274 (TALP…SLLE). Over residues 1374–1397 (TDSAEGTPVNFSSAASLSDETLQG) the composition is skewed to polar residues. Repeat unit 4 spans residues 1375 to 1394 (DSAEGTPVNFSSAASLSDET). A compositionally biased stretch (basic and acidic residues) spans 1399–1411 (SRDKPAGPGDRQK). A compositionally biased stretch (polar residues) spans 1455–1470 (RPQSARSNRDSSCQTR). Over residues 1517–1529 (LKREKPAGRKETP) the composition is skewed to basic and acidic residues. Repeat 5 spans residues 1546–1565 (LIVDETPPCYSLTSSASSLS). Positions 1556–1574 (SLTSSASSLSEPEAPEQPA) are enriched in low complexity. Residues Ser-1563 and Ser-1565 each carry the phosphoserine modification. A compositionally biased stretch (basic residues) spans 1608–1624 (PRRRTQVPGSRRRKPRA). 2 stretches are compositionally biased toward low complexity: residues 1780-1795 (SGPC…SGTT) and 1839-1868 (LAKT…TPTG). The required for localization to microtubules and function in microtubule stabilization stretch occupies residues 1792 to 1871 (SGTTQPETVT…PLATPTGGPL (80 aa)). Position 1861 is a phosphoserine (Ser-1861). The segment covering 1910–1921 (RVPPPLARPSPE) has biased composition (pro residues). Composition is skewed to low complexity over residues 1945 to 1955 (RMASARSSGSE) and 1983 to 1997 (LSSA…QAAS). An interaction with MAPRE1 and MAPRE3 region spans residues 2037-2114 (GLAPLAPRRT…PLPRVAPPGT (78 aa)). Residues 2165-2179 (DVATSKTNSSTSPSL) show a composition bias toward polar residues.

The protein belongs to the adenomatous polyposis coli (APC) family. Interacts with PSRC1. Interacts with MAPRE3. Interacts with APC, CTNNB1, TP53BP2, MAPRE1 and possibly with AXIN2. As to expression, expressed in brain and other neural tissues.

The protein localises to the cytoplasm. The protein resides in the cytoskeleton. It is found in the golgi apparatus. It localises to the perinuclear region. Stabilizes microtubules and may regulate actin fiber dynamics through the activation of Rho family GTPases. May also function in Wnt signaling by promoting the rapid degradation of CTNNB1. The protein is Adenomatous polyposis coli protein 2 (Apc2) of Mus musculus (Mouse).